Here is a 61-residue protein sequence, read N- to C-terminus: Large ribosomal subunit protein bL32 (61 aa).

Basic residues predominate over residues 1–16 (MAVPKRKTSPSKRGMR). The segment at 1 to 35 (MAVPKRKTSPSKRGMRRSADGLKSATYVEDKNSGE) is disordered.

This sequence belongs to the bacterial ribosomal protein bL32 family.

This is Large ribosomal subunit protein bL32 from Agrobacterium fabrum (strain C58 / ATCC 33970) (Agrobacterium tumefaciens (strain C58)).